A 273-amino-acid polypeptide reads, in one-letter code: Rho GTPase-activating protein gacB (273 aa).

Residues 1-192 (MTDQTLRLEN…YLISHFNEIF (192 aa)) enclose the Rho-GAP domain.

The protein resides in the cytoplasm. Rho GTPase-activating protein involved in the signal transduction pathway. The protein is Rho GTPase-activating protein gacB (gacB) of Dictyostelium discoideum (Social amoeba).